The chain runs to 724 residues: Ribosomal RNA large subunit methyltransferase K/L (724 aa).

Residues 42 to 153 (DAQRLVLWSR…KGRATLSVDL (112 aa)) enclose the THUMP domain.

This sequence belongs to the methyltransferase superfamily. RlmKL family.

It is found in the cytoplasm. The enzyme catalyses guanosine(2445) in 23S rRNA + S-adenosyl-L-methionine = N(2)-methylguanosine(2445) in 23S rRNA + S-adenosyl-L-homocysteine + H(+). It catalyses the reaction guanosine(2069) in 23S rRNA + S-adenosyl-L-methionine = N(2)-methylguanosine(2069) in 23S rRNA + S-adenosyl-L-homocysteine + H(+). Functionally, specifically methylates the guanine in position 2445 (m2G2445) and the guanine in position 2069 (m7G2069) of 23S rRNA. The protein is Ribosomal RNA large subunit methyltransferase K/L of Xylella fastidiosa (strain M23).